The sequence spans 181 residues: PLAT domain-containing protein 1 (181 aa).

The first 14 residues, 1-14 (MARRDVLLPFLLLL), serve as a signal peptide directing secretion. Ala-15 carries the post-translational modification N-acetylalanine. Residues 29–156 (CVYTFYLRTG…SPYELTAVRN (128 aa)) form the PLAT domain.

In terms of tissue distribution, expressed in root tips, pericycle cells, lateral root primordia, stomata, leaf vasculature, hydathodes and floral organs.

Its subcellular location is the endoplasmic reticulum. It localises to the plastid. The protein resides in the chloroplast. It is found in the plastoglobule. In terms of biological role, positive regulator of abiotic stress tolerance involved in the regulation of plant growth. May be a downstream target of the abscisic acid (ABA) signaling pathway. The sequence is that of PLAT domain-containing protein 1 from Arabidopsis thaliana (Mouse-ear cress).